A 194-amino-acid polypeptide reads, in one-letter code: ATP-dependent Clp protease proteolytic subunit 3 (194 aa).

Ser96 (nucleophile) is an active-site residue. The active site involves His121.

It belongs to the peptidase S14 family. Fourteen ClpP subunits assemble into 2 heptameric rings which stack back to back to give a disk-like structure with a central cavity, resembling the structure of eukaryotic proteasomes.

It is found in the cytoplasm. It catalyses the reaction Hydrolysis of proteins to small peptides in the presence of ATP and magnesium. alpha-casein is the usual test substrate. In the absence of ATP, only oligopeptides shorter than five residues are hydrolyzed (such as succinyl-Leu-Tyr-|-NHMec, and Leu-Tyr-Leu-|-Tyr-Trp, in which cleavage of the -Tyr-|-Leu- and -Tyr-|-Trp bonds also occurs).. Its function is as follows. Cleaves peptides in various proteins in a process that requires ATP hydrolysis. Has a chymotrypsin-like activity. Plays a major role in the degradation of misfolded proteins. The chain is ATP-dependent Clp protease proteolytic subunit 3 from Rhizobium johnstonii (strain DSM 114642 / LMG 32736 / 3841) (Rhizobium leguminosarum bv. viciae).